A 255-amino-acid chain; its full sequence is 5-oxoprolinase subunit A 1 (255 aa).

Belongs to the LamB/PxpA family. Forms a complex composed of PxpA, PxpB and PxpC.

It carries out the reaction 5-oxo-L-proline + ATP + 2 H2O = L-glutamate + ADP + phosphate + H(+). Functionally, catalyzes the cleavage of 5-oxoproline to form L-glutamate coupled to the hydrolysis of ATP to ADP and inorganic phosphate. The sequence is that of 5-oxoprolinase subunit A 1 from Bradyrhizobium diazoefficiens (strain JCM 10833 / BCRC 13528 / IAM 13628 / NBRC 14792 / USDA 110).